The sequence spans 335 residues: Fructose-1,6-bisphosphatase class 1 (335 aa).

Residues Glu-92, Asp-114, Leu-116, and Asp-117 each contribute to the Mg(2+) site. Residues 117–120, Asn-209, and Lys-275 contribute to the substrate site; that span reads DGSS. Glu-281 provides a ligand contact to Mg(2+).

Belongs to the FBPase class 1 family. Homotetramer. Requires Mg(2+) as cofactor.

The protein localises to the cytoplasm. It carries out the reaction beta-D-fructose 1,6-bisphosphate + H2O = beta-D-fructose 6-phosphate + phosphate. Its pathway is carbohydrate biosynthesis; gluconeogenesis. This chain is Fructose-1,6-bisphosphatase class 1, found in Paracidovorax citrulli (strain AAC00-1) (Acidovorax citrulli).